The primary structure comprises 84 residues: Putative regulatory protein Dde_2720 (84 aa).

The protein belongs to the RemA family.

The chain is Putative regulatory protein Dde_2720 from Oleidesulfovibrio alaskensis (strain ATCC BAA-1058 / DSM 17464 / G20) (Desulfovibrio alaskensis).